The following is a 792-amino-acid chain: Carboxysome assembly protein CsoS2 (792 aa).

Over residues 1–15 the composition is skewed to basic and acidic residues; the sequence is MAKQSSRELALERRK. The interval 1–235 is N-terminal domain; that stretch reads MAKQSSRELA…EISQRVRELR (235 aa). Disordered stretches follow at residues 1 to 259, 280 to 299, and 338 to 359; these read MAKQ…RNGS, QVVT…NEAS, and HGNR…DEPG. An N-repeat 1 repeat occupies 7-22; it reads RELALERRKALSNSGK. Composition is skewed to polar residues over residues 17–36 and 69–82; these read LSNS…NRIR and DTSF…SGAS. One copy of the N-repeat 2 repeat lies at 94 to 109; that stretch reads RELVLARRDELSRRGQ. Basic and acidic residues-rich tracts occupy residues 97–106 and 113–126; these read VLARRDELSR and KSKD…EKIS. Positions 161–175 are enriched in polar residues; that stretch reads DTVSRLSSRNSTSRP. 2 N-repeat repeats span residues 187-202 and 225-240; these read RALV…KHGK and REIS…KSGA. Basic and acidic residues predominate over residues 218 to 236; the sequence is GDPDLSSREISQRVRELRS. Residues 240–615 form a middle region region; the sequence is ATGKKRSGAC…VQACGSDAPA (376 aa). M-repeat repeat units follow at residues 270-319, 330-379, 388-427, 441-490, 500-549, and 560-609; these read KVGL…DTFC, KVAV…NQYC, KVGQ…GDQY, KVGS…NTFC, KVGL…SGWC, and RTPK…VQAC. Disordered regions lie at residues 608 to 662 and 687 to 792; these read ACGS…GSQI and HFKS…GARG. The tract at residues 616–792 is C-terminal domain; sequence GSNDHQGSSE…LITVSGGARG (177 aa). 2 stretches are compositionally biased toward polar residues: residues 618 to 636 and 651 to 662; these read NDHQ…SVQS and VTGTSYEQGSQI. 2 C-repeat repeats span residues 633 to 678 and 703 to 738; these read SVQS…GTEQ and TRPE…EGAS. Positions 763 to 792 are C-terminal peptide (CTP); the sequence is EVSQPMSRVTGSSGNTDQGSLITVSGGARG. The segment covering 764–785 has biased composition (polar residues); it reads VSQPMSRVTGSSGNTDQGSLIT.

This sequence belongs to the CsoS2 family. As to quaternary structure, probably interacts with the carboxysome major shell protein CsoS1 via the N-terminal domain; this complex probably also interacts with RuBisCO. Has been suggested to undergo ribosomal frameshifting, as does its ortholog in H.neapolitanus. The exact position of the putative frameshift is not given, but it would probably occur in the sixth M-repeat and remove the C-terminus.

It is found in the carboxysome. Required for alpha-carboxysome (Cb) assembly, mediates interaction between RuBisCO and the Cb shell. The protein is probably intrinsically disordered. The C-terminal repeats act as the encapsulation signal to target proteins to the Cb; they are necessary and sufficient to target both CsoS2 and foreign proteins to the Cb. The N-terminal repeats of this protein bind simultaneously to both subunits of RuBisCO. Probably also interacts with the major shell proteins (CsoS1); that interaction would increase the local concentration of CsoS2 so that it can condense RuBisCO and full carboxysomes can be formed. The sequence is that of Carboxysome assembly protein CsoS2 from Prochlorococcus marinus (strain MIT 9313).